We begin with the raw amino-acid sequence, 137 residues long: Small ribosomal subunit protein uS11 (137 aa).

The segment at 116–137 (EDVTPIPHDGTRPKGGRRGRRV) is disordered.

Belongs to the universal ribosomal protein uS11 family. In terms of assembly, part of the 30S ribosomal subunit.

Its function is as follows. Located on the platform of the 30S subunit. This is Small ribosomal subunit protein uS11 from Pyrococcus abyssi (strain GE5 / Orsay).